Reading from the N-terminus, the 293-residue chain is 4-diphosphocytidyl-2-C-methyl-D-erythritol kinase (293 aa).

Residue lysine 16 is part of the active site. Position 99 to 109 (99 to 109 (PMGAGLGGGSS)) interacts with ATP. Aspartate 141 is an active-site residue.

The protein belongs to the GHMP kinase family. IspE subfamily.

It carries out the reaction 4-CDP-2-C-methyl-D-erythritol + ATP = 4-CDP-2-C-methyl-D-erythritol 2-phosphate + ADP + H(+). The protein operates within isoprenoid biosynthesis; isopentenyl diphosphate biosynthesis via DXP pathway; isopentenyl diphosphate from 1-deoxy-D-xylulose 5-phosphate: step 3/6. Catalyzes the phosphorylation of the position 2 hydroxy group of 4-diphosphocytidyl-2C-methyl-D-erythritol. This is 4-diphosphocytidyl-2-C-methyl-D-erythritol kinase from Burkholderia cenocepacia (strain HI2424).